Consider the following 521-residue polypeptide: Bifunctional purine biosynthesis protein PurH (521 aa).

The MGS-like domain maps to 1–145 (MIKQALISVS…KNHRDVTVVV (145 aa)).

Belongs to the PurH family.

It carries out the reaction (6R)-10-formyltetrahydrofolate + 5-amino-1-(5-phospho-beta-D-ribosyl)imidazole-4-carboxamide = 5-formamido-1-(5-phospho-D-ribosyl)imidazole-4-carboxamide + (6S)-5,6,7,8-tetrahydrofolate. The enzyme catalyses IMP + H2O = 5-formamido-1-(5-phospho-D-ribosyl)imidazole-4-carboxamide. Its pathway is purine metabolism; IMP biosynthesis via de novo pathway; 5-formamido-1-(5-phospho-D-ribosyl)imidazole-4-carboxamide from 5-amino-1-(5-phospho-D-ribosyl)imidazole-4-carboxamide (10-formyl THF route): step 1/1. It participates in purine metabolism; IMP biosynthesis via de novo pathway; IMP from 5-formamido-1-(5-phospho-D-ribosyl)imidazole-4-carboxamide: step 1/1. The chain is Bifunctional purine biosynthesis protein PurH from Burkholderia cenocepacia (strain ATCC BAA-245 / DSM 16553 / LMG 16656 / NCTC 13227 / J2315 / CF5610) (Burkholderia cepacia (strain J2315)).